The primary structure comprises 425 residues: Histidine--tRNA ligase (425 aa).

Belongs to the class-II aminoacyl-tRNA synthetase family. In terms of assembly, homodimer.

The protein localises to the cytoplasm. It carries out the reaction tRNA(His) + L-histidine + ATP = L-histidyl-tRNA(His) + AMP + diphosphate + H(+). This chain is Histidine--tRNA ligase, found in Shewanella sp. (strain W3-18-1).